A 555-amino-acid chain; its full sequence is Inorganic phosphate transporter 1-11 (555 aa).

The Cytoplasmic segment spans residues M1 to A28. Residues I29–V49 form a helical membrane-spanning segment. The Extracellular segment spans residues S50–N77. Residues M78 to G98 traverse the membrane as a helical segment. Topologically, residues D99 to R105 are cytoplasmic. A helical transmembrane segment spans residues V106–G126. Topologically, residues S127–K130 are extracellular. A helical membrane pass occupies residues A131–Y151. Residues P152 to R167 are Cytoplasmic-facing. The chain crosses the membrane as a helical span at residues G168–V188. Residues S189 to P216 are Extracellular-facing. A helical membrane pass occupies residues A217–F237. Residues Y238–R298 lie on the Cytoplasmic side of the membrane. The chain crosses the membrane as a helical span at residues H299 to S319. At Q320–K351 the chain is on the extracellular side. A helical membrane pass occupies residues A352–I372. The Cytoplasmic portion of the chain corresponds to D373–R377. A helical transmembrane segment spans residues Y378–L398. Topologically, residues Y399–L408 are extracellular. The chain crosses the membrane as a helical span at residues F409–F436. Over P437–S442 the chain is Cytoplasmic. The chain crosses the membrane as a helical span at residues T443–I463. Topologically, residues Q464 to K477 are extracellular. Residues A478–E498 traverse the membrane as a helical segment. At T499–A555 the chain is on the cytoplasmic side. The disordered stretch occupies residues E506–A555. Residues G512–A521 show a composition bias toward gly residues. The segment covering P522–D535 has biased composition (low complexity). A compositionally biased stretch (polar residues) spans A544–A555.

Belongs to the major facilitator superfamily. Phosphate:H(+) symporter (TC 2.A.1.9) family.

It is found in the membrane. In terms of biological role, symbiosis-specific regulated inorganic phosphate (Pi) transporter. Probably involved in symbiosis-mediated Pi uptake in roots colonized by myccorhizal fungi. In Oryza sativa subsp. japonica (Rice), this protein is Inorganic phosphate transporter 1-11 (PHT1-11).